The chain runs to 473 residues: UDP-N-acetylmuramate--L-alanine ligase (473 aa).

Residue 112–118 coordinates ATP; that stretch reads GTHGKTT.

Belongs to the MurCDEF family.

The protein localises to the cytoplasm. It catalyses the reaction UDP-N-acetyl-alpha-D-muramate + L-alanine + ATP = UDP-N-acetyl-alpha-D-muramoyl-L-alanine + ADP + phosphate + H(+). It functions in the pathway cell wall biogenesis; peptidoglycan biosynthesis. Functionally, cell wall formation. This is UDP-N-acetylmuramate--L-alanine ligase from Nitrosomonas europaea (strain ATCC 19718 / CIP 103999 / KCTC 2705 / NBRC 14298).